The chain runs to 145 residues: MPGVSVRDVPAQDFINAYAQFLQRQGKLEVPGYVDIVKTSAGNDLPPQEAETWFYKRAASIARHIYLRKQVGVGALNKLYGGAKNRGFRPHKHVDASGSINRKCVQALQKIGVLEISPKGGRRISENGQRDLDRIAAQTLEEDDE.

The segment at 120-145 (GGRRISENGQRDLDRIAAQTLEEDDE) is disordered. Over residues 123–134 (RISENGQRDLDR) the composition is skewed to basic and acidic residues.

This sequence belongs to the eukaryotic ribosomal protein eS19 family. As to quaternary structure, component of the small ribosomal subunit. Mature ribosomes consist of a small (40S) and a large (60S) subunit. The 40S subunit contains about 32 different proteins and 1 molecule of RNA (18S). The 60S subunit contains 45 different proteins and 3 molecules of RNA (25S, 5.8S and 5S).

The protein resides in the cytoplasm. Its function is as follows. Component of the ribosome, a large ribonucleoprotein complex responsible for the synthesis of proteins in the cell. The small ribosomal subunit (SSU) binds messenger RNAs (mRNAs) and translates the encoded message by selecting cognate aminoacyl-transfer RNA (tRNA) molecules. The large subunit (LSU) contains the ribosomal catalytic site termed the peptidyl transferase center (PTC), which catalyzes the formation of peptide bonds, thereby polymerizing the amino acids delivered by tRNAs into a polypeptide chain. The nascent polypeptides leave the ribosome through a tunnel in the LSU and interact with protein factors that function in enzymatic processing, targeting, and the membrane insertion of nascent chains at the exit of the ribosomal tunnel. RPS19A is required for proper maturation of the small (40S) ribosomal subunit. The chain is Small ribosomal subunit protein eS19 (RPS19A) from Candida albicans (strain SC5314 / ATCC MYA-2876) (Yeast).